We begin with the raw amino-acid sequence, 382 residues long: Mannitol-1-phosphate 5-dehydrogenase (382 aa).

3-14 (ALHFGAGNIGRG) lines the NAD(+) pocket. At lysine 269 the chain carries N6-acetyllysine.

It belongs to the mannitol dehydrogenase family.

It catalyses the reaction D-mannitol 1-phosphate + NAD(+) = beta-D-fructose 6-phosphate + NADH + H(+). The sequence is that of Mannitol-1-phosphate 5-dehydrogenase from Escherichia coli O45:K1 (strain S88 / ExPEC).